Consider the following 427-residue polypeptide: Glutamate-1-semialdehyde 2,1-aminomutase (427 aa).

Lysine 265 is modified (N6-(pyridoxal phosphate)lysine).

The protein belongs to the class-III pyridoxal-phosphate-dependent aminotransferase family. HemL subfamily. In terms of assembly, homodimer. Pyridoxal 5'-phosphate serves as cofactor.

Its subcellular location is the cytoplasm. The enzyme catalyses (S)-4-amino-5-oxopentanoate = 5-aminolevulinate. It participates in porphyrin-containing compound metabolism; protoporphyrin-IX biosynthesis; 5-aminolevulinate from L-glutamyl-tRNA(Glu): step 2/2. The sequence is that of Glutamate-1-semialdehyde 2,1-aminomutase from Burkholderia cenocepacia (strain HI2424).